We begin with the raw amino-acid sequence, 264 residues long: Indole-3-glycerol phosphate synthase (264 aa).

It belongs to the TrpC family.

The enzyme catalyses 1-(2-carboxyphenylamino)-1-deoxy-D-ribulose 5-phosphate + H(+) = (1S,2R)-1-C-(indol-3-yl)glycerol 3-phosphate + CO2 + H2O. Its pathway is amino-acid biosynthesis; L-tryptophan biosynthesis; L-tryptophan from chorismate: step 4/5. The chain is Indole-3-glycerol phosphate synthase from Xylella fastidiosa (strain 9a5c).